The chain runs to 363 residues: tRNA(Met) cytidine acetate ligase (363 aa).

ATP contacts are provided by residues 7 to 20, Gly-96, Asn-152, and Arg-175; that span reads IAEY…HKYL.

Belongs to the TmcAL family.

It is found in the cytoplasm. The enzyme catalyses cytidine(34) in elongator tRNA(Met) + acetate + ATP = N(4)-acetylcytidine(34) in elongator tRNA(Met) + AMP + diphosphate. Catalyzes the formation of N(4)-acetylcytidine (ac(4)C) at the wobble position of elongator tRNA(Met), using acetate and ATP as substrates. First activates an acetate ion to form acetyladenylate (Ac-AMP) and then transfers the acetyl group to tRNA to form ac(4)C34. In Streptococcus suis (strain 98HAH33), this protein is tRNA(Met) cytidine acetate ligase.